A 220-amino-acid polypeptide reads, in one-letter code: Deoxyribose-phosphate aldolase (220 aa).

Asp89 (proton donor/acceptor) is an active-site residue. Catalysis depends on Lys151, which acts as the Schiff-base intermediate with acetaldehyde. Residue Lys180 is the Proton donor/acceptor of the active site.

Belongs to the DeoC/FbaB aldolase family. DeoC type 1 subfamily.

It is found in the cytoplasm. It carries out the reaction 2-deoxy-D-ribose 5-phosphate = D-glyceraldehyde 3-phosphate + acetaldehyde. It participates in carbohydrate degradation; 2-deoxy-D-ribose 1-phosphate degradation; D-glyceraldehyde 3-phosphate and acetaldehyde from 2-deoxy-alpha-D-ribose 1-phosphate: step 2/2. Catalyzes a reversible aldol reaction between acetaldehyde and D-glyceraldehyde 3-phosphate to generate 2-deoxy-D-ribose 5-phosphate. This chain is Deoxyribose-phosphate aldolase, found in Streptococcus pneumoniae (strain 70585).